A 1060-amino-acid polypeptide reads, in one-letter code: Probable serine/threonine-protein kinase MARK-A (1060 aa).

2 stretches are compositionally biased toward basic and acidic residues: residues 1–11 (METLKEEEQFR) and 23–37 (HLKEETQIQQKEREQ). 2 disordered regions span residues 1-52 (METL…LQLQ) and 67-88 (NKIPSSNNSSNSSSPNPLSISV). 2 stretches are compositionally biased toward low complexity: residues 38–52 (QQQQQQQLQQQLQLQ) and 68–88 (KIPSSNNSSNSSSPNPLSISV). In terms of domain architecture, Protein kinase spans 109–361 (YLVIKTIGRG…MEEIINHPWL (253 aa)). ATP-binding positions include 115–123 (IGRGQFGKV) and lysine 139. Aspartate 232 functions as the Proton acceptor in the catalytic mechanism. Positions 409–475 (INNINNTMAT…TTTTNATTTT (67 aa)) are enriched in low complexity. Disordered stretches follow at residues 409–488 (INNI…NNEE), 560–701 (GENS…SPLC), 714–886 (LREK…PVHS), and 899–966 (DDKS…QEPR). The UBA domain maps to 488 to 528 (ELDQEIIEELVGLGFEREELCNSIRQNKYNDAASTYFLLQG). Polar residues predominate over residues 577–594 (TVDSPKSTNTPQYRSSNT). 4 stretches are compositionally biased toward low complexity: residues 603–613 (QQQQQQQQQQQ), 620–637 (QQQNQQQSQQQYNNNNHN), 650–699 (STTV…NPSP), and 720–760 (TTTN…TSPN). The span at 761–770 (LQPFSLASTA) shows a compositional bias: polar residues. Composition is skewed to low complexity over residues 771–799 (NNNNNNNNSNNNSNNNNNNNNNNNNSLNS) and 811–831 (QQQQQMQQASNTRRLRSNSSS). Residues 837–846 (QRQESRKLED) are compositionally biased toward basic and acidic residues. 2 stretches are compositionally biased toward low complexity: residues 904-926 (NSSSSNNNTNNNNTTTSVSTNNT) and 935-965 (QNSNNNNQQATSSSPNVTSPSSPSQQQQQEP). The KA1 domain maps to 1008-1057 (IECETEGVRFSIEICRLPRLSVNGLKFKRIGGSSWRYKSICKDLLSQMKL).

The protein belongs to the protein kinase superfamily. CAMK Ser/Thr protein kinase family. SNF1 subfamily.

The enzyme catalyses L-seryl-[protein] + ATP = O-phospho-L-seryl-[protein] + ADP + H(+). It carries out the reaction L-threonyl-[protein] + ATP = O-phospho-L-threonyl-[protein] + ADP + H(+). This chain is Probable serine/threonine-protein kinase MARK-A (mrkA), found in Dictyostelium discoideum (Social amoeba).